A 503-amino-acid polypeptide reads, in one-letter code: Probable DNA ligase (503 aa).

Residue glutamate 210 participates in ATP binding. The active-site N6-AMP-lysine intermediate is the lysine 212. Arginine 217, arginine 232, glutamate 261, phenylalanine 296, arginine 367, and lysine 373 together coordinate ATP.

The protein belongs to the ATP-dependent DNA ligase family. It depends on Mg(2+) as a cofactor.

It catalyses the reaction ATP + (deoxyribonucleotide)n-3'-hydroxyl + 5'-phospho-(deoxyribonucleotide)m = (deoxyribonucleotide)n+m + AMP + diphosphate.. DNA ligase that seals nicks in double-stranded DNA during DNA replication, DNA recombination and DNA repair. The sequence is that of Probable DNA ligase from Rhodococcus jostii (strain RHA1).